The sequence spans 165 residues: NAD(P)H-quinone oxidoreductase subunit I, chloroplastic (165 aa).

4Fe-4S ferredoxin-type domains lie at 55 to 84 (GRIHFEFDKCIACEVCVRVCPINLPVVDWE) and 95 to 124 (KSYSIDFGVCIFCGNCVEYCPTNCLSMTEE). [4Fe-4S] cluster is bound by residues C64, C67, C70, C74, C104, C107, C110, and C114.

This sequence belongs to the complex I 23 kDa subunit family. As to quaternary structure, NDH is composed of at least 16 different subunits, 5 of which are encoded in the nucleus. Requires [4Fe-4S] cluster as cofactor.

The protein localises to the plastid. Its subcellular location is the chloroplast thylakoid membrane. It carries out the reaction a plastoquinone + NADH + (n+1) H(+)(in) = a plastoquinol + NAD(+) + n H(+)(out). The enzyme catalyses a plastoquinone + NADPH + (n+1) H(+)(in) = a plastoquinol + NADP(+) + n H(+)(out). In terms of biological role, NDH shuttles electrons from NAD(P)H:plastoquinone, via FMN and iron-sulfur (Fe-S) centers, to quinones in the photosynthetic chain and possibly in a chloroplast respiratory chain. The immediate electron acceptor for the enzyme in this species is believed to be plastoquinone. Couples the redox reaction to proton translocation, and thus conserves the redox energy in a proton gradient. The protein is NAD(P)H-quinone oxidoreductase subunit I, chloroplastic of Psilotum nudum (Whisk fern).